The sequence spans 334 residues: Glyoxylate reductase (334 aa).

NADP(+) contacts are provided by residues 158–161, 180–182, and 239–241; these read FGRI, SRT, and IAR. Residues R241 and E270 contribute to the active site. Catalysis depends on H288, which acts as the Proton donor. An NADP(+)-binding site is contributed by 288-290; that stretch reads HIG.

The protein belongs to the D-isomer specific 2-hydroxyacid dehydrogenase family. GyaR subfamily. As to quaternary structure, homodimer.

It localises to the cytoplasm. It carries out the reaction glycolate + NAD(+) = glyoxylate + NADH + H(+). This Thermococcus onnurineus (strain NA1) protein is Glyoxylate reductase.